We begin with the raw amino-acid sequence, 620 residues long: MKRLGGLALAALGVVFGDIGTSPLYAIRECFHGDYGIAINEANVFGVLSLLVWSLLLIVSLKYLTFIMKADNDGEGGILALTALLIRHCKKNGGSERFFLIAIGLFGAALLYGDGMITPAISVLSALEGVQMVAPAFHDLIIPATVTVLVILFLFQHHGTARVGTLFGPVILLWFVVLGVLGLVEILRYPQILQAFFPWHGIMFLLNNQLHGFMVLGAVFLSVTGAEALYADMGHFGKRPIRLTWAFLVLPALLLNYFGQGALLLDSPADAHHPFYGLVPSWGLIPMVILSTSATIIASQALITGVFSLTQQAIQLGYLPRLTVTHTSAKHMGQIYVPAANWSLMVATISLVIGFGSSSKLAAAYGVAVTATMLISTILFYYVARDLWRWNKSVLNVMIVVFLLVDLAFFGASASKLFHGAWFPLVIAAVMFTVMMTWKQGRGLLLKQLQDRTLTVEEFMSSLALQPPYRTNGQAVYLTANPDLVPLAMLHNLRHNKVLHSEVALFHFSTERVPRVPNNRKVEVVKLGDGFYKVVARYGFLEYPTIRQVLALANHQGLHFKPEAISFFLSREKIVAGVKSKMTIWRKKLFAVMSRNAISATSYYDLPPGQVIEIGLMVQI.

A run of 12 helical transmembrane segments spans residues 7 to 27 (LALA…LYAI), 44 to 64 (VFGV…LKYL), 98 to 118 (FFLI…GMIT), 135 to 155 (PAFH…LFLF), 166 to 186 (LFGP…LVEI), 201 to 221 (GIMF…AVFL), 245 to 265 (WAFL…ALLL), 278 to 298 (LVPS…TIIA), 335 to 355 (IYVP…VIGF), 361 to 381 (LAAA…ILFY), 394 to 414 (VLNV…GASA), and 417 to 437 (LFHG…VMMT).

Belongs to the HAK/KUP transporter (TC 2.A.72) family.

The protein resides in the cell inner membrane. The catalysed reaction is K(+)(in) + H(+)(in) = K(+)(out) + H(+)(out). Transport of potassium into the cell. Likely operates as a K(+):H(+) symporter. The sequence is that of Probable potassium transport system protein Kup from Chlorobium chlorochromatii (strain CaD3).